We begin with the raw amino-acid sequence, 199 residues long: NAD(P)H dehydrogenase (quinone) (199 aa).

The Flavodoxin-like domain occupies Ile-4–Val-190. FMN contacts are provided by residues Ser-10–Ile-15 and Thr-79–Phe-81. Tyr-12 lines the NAD(+) pocket. A substrate-binding site is contributed by Trp-99. Residues Ser-114 to Gly-119 and His-134 each bind FMN.

The protein belongs to the WrbA family. FMN serves as cofactor.

The enzyme catalyses a quinone + NADH + H(+) = a quinol + NAD(+). It carries out the reaction a quinone + NADPH + H(+) = a quinol + NADP(+). This is NAD(P)H dehydrogenase (quinone) from Yersinia enterocolitica serotype O:8 / biotype 1B (strain NCTC 13174 / 8081).